A 238-amino-acid polypeptide reads, in one-letter code: 1-(5-phosphoribosyl)-5-[(5-phosphoribosylamino)methylideneamino] imidazole-4-carboxamide isomerase (238 aa).

The Proton acceptor role is filled by aspartate 8. Aspartate 129 functions as the Proton donor in the catalytic mechanism.

This sequence belongs to the HisA/HisF family.

The protein resides in the cytoplasm. The catalysed reaction is 1-(5-phospho-beta-D-ribosyl)-5-[(5-phospho-beta-D-ribosylamino)methylideneamino]imidazole-4-carboxamide = 5-[(5-phospho-1-deoxy-D-ribulos-1-ylimino)methylamino]-1-(5-phospho-beta-D-ribosyl)imidazole-4-carboxamide. It functions in the pathway amino-acid biosynthesis; L-histidine biosynthesis; L-histidine from 5-phospho-alpha-D-ribose 1-diphosphate: step 4/9. The protein is 1-(5-phosphoribosyl)-5-[(5-phosphoribosylamino)methylideneamino] imidazole-4-carboxamide isomerase of Brachyspira hyodysenteriae (strain ATCC 49526 / WA1).